The sequence spans 412 residues: Tryptophan synthase beta chain 1 (412 aa).

The residue at position 103 (lysine 103) is an N6-(pyridoxal phosphate)lysine.

It belongs to the TrpB family. Tetramer of two alpha and two beta chains. The cofactor is pyridoxal 5'-phosphate.

The catalysed reaction is (1S,2R)-1-C-(indol-3-yl)glycerol 3-phosphate + L-serine = D-glyceraldehyde 3-phosphate + L-tryptophan + H2O. The protein operates within amino-acid biosynthesis; L-tryptophan biosynthesis; L-tryptophan from chorismate: step 5/5. Functionally, the beta subunit is responsible for the synthesis of L-tryptophan from indole and L-serine. This is Tryptophan synthase beta chain 1 (trpB1) from Chlamydia caviae (strain ATCC VR-813 / DSM 19441 / 03DC25 / GPIC) (Chlamydophila caviae).